Here is a 228-residue protein sequence, read N- to C-terminus: Probable octanoyltransferase (228 aa).

In terms of domain architecture, BPL/LPL catalytic spans 27-198 (SGGDDAFILV…AFEEVFEAKV (172 aa)). Substrate is bound by residues 65–72 (RGGDATYH), 129–131 (SIG), and 142–144 (GVA). Residue C160 is the Acyl-thioester intermediate of the active site.

This sequence belongs to the LipB family.

The protein localises to the cytoplasm. The enzyme catalyses octanoyl-[ACP] + L-lysyl-[protein] = N(6)-octanoyl-L-lysyl-[protein] + holo-[ACP] + H(+). It functions in the pathway protein modification; protein lipoylation via endogenous pathway; protein N(6)-(lipoyl)lysine from octanoyl-[acyl-carrier-protein]: step 1/2. Its function is as follows. Catalyzes the transfer of endogenously produced octanoic acid from octanoyl-acyl-carrier-protein onto the lipoyl domains of lipoate-dependent enzymes. Lipoyl-ACP can also act as a substrate although octanoyl-ACP is likely to be the physiological substrate. The polypeptide is Probable octanoyltransferase (Pyrobaculum calidifontis (strain DSM 21063 / JCM 11548 / VA1)).